We begin with the raw amino-acid sequence, 231 residues long: MRVLVKLSGEALSGEGGRGFDPERVNYIVNEIKSAIEEGFKIGIVVGAGNLFRGVELKNLTMTRADQIGLLGTVMNSVYLKDIFERSGLKARIYSQIVNLPDVERVNYDSIESALRENSILIFAGGTSNPFFTTDTAAVLRAQEMRAKLVVKATKVDGVYDKDPKKFPDAKKIPHLTFSEAMKMGLKVMDAEAFALCKKLGITVKVINFFEPGTLLKALKGEDVGSTVVPD.

6–9 (KLSG) serves as a coordination point for ATP. Residues 14–19 (GEGGRG) form an involved in allosteric activation by GTP region. The ATP site is built by G49 and R53. UMP contacts are provided by residues D66 and 127-134 (TSNPFFTT). T154, Y160, and D163 together coordinate ATP.

This sequence belongs to the UMP kinase family. As to quaternary structure, homohexamer.

The protein resides in the cytoplasm. It carries out the reaction UMP + ATP = UDP + ADP. Its pathway is pyrimidine metabolism; CTP biosynthesis via de novo pathway; UDP from UMP (UMPK route): step 1/1. Allosterically activated by GTP. Inhibited by UTP. Functionally, catalyzes the reversible phosphorylation of UMP to UDP. The sequence is that of Uridylate kinase from Thermotoga maritima (strain ATCC 43589 / DSM 3109 / JCM 10099 / NBRC 100826 / MSB8).